Here is a 905-residue protein sequence, read N- to C-terminus: Chitin synthase 3B (905 aa).

Residues 1 to 10 are compositionally biased toward basic and acidic residues; it reads MAYNGRDQEY. The tract at residues 1 to 136 is disordered; it reads MAYNGRDQEY…GGGGGLGRSK (136 aa). The segment covering 81-93 has biased composition (gly residues); sequence GPTGYGDTGGSFG. The N-linked (GlcNAc...) asparagine glycan is linked to Asn536. Residues 562-584 form a helical membrane-spanning segment; it reads MFFLHIQLIYTTLNTMFAWFSLG. An N-linked (GlcNAc...) asparagine glycan is attached at Asn601. The next 6 membrane-spanning stretches (helical) occupy residues 618–638, 653–673, 705–725, 733–753, 832–852, and 873–893; these read IVNALLQYLYLAFVMLQFILA, SFMVFGLIQGYILVLSAYLVV, VILVALITIYGLNFIASFMYL, SFPYYLVLMSTYINILMVYAF, TGLVVCWLFGNILLIVCITST, and FLLYATAVLSLVRFFGFLWFL.

It belongs to the chitin synthase family. Class III subfamily.

The protein localises to the cell membrane. The catalysed reaction is [(1-&gt;4)-N-acetyl-beta-D-glucosaminyl](n) + UDP-N-acetyl-alpha-D-glucosamine = [(1-&gt;4)-N-acetyl-beta-D-glucosaminyl](n+1) + UDP + H(+). Polymerizes chitin, a structural polymer of the cell wall and septum, by transferring the sugar moiety of UDP-GlcNAc to the non-reducing end of the growing chitin polymer. Plays essential functions in fungal survival and host infection. The polypeptide is Chitin synthase 3B (Gibberella zeae (strain ATCC MYA-4620 / CBS 123657 / FGSC 9075 / NRRL 31084 / PH-1) (Wheat head blight fungus)).